The following is a 736-amino-acid chain: Cytosolic neutral trehalase (736 aa).

Positions 1-47 (MSEAPQARRVGSVDDHSVYDDAKTYYTSEERHNNSRSGPRQRTYSQN) are disordered. Over residues 11–33 (GSVDDHSVYDDAKTYYTSEERHN) the composition is skewed to basic and acidic residues. A compositionally biased stretch (polar residues) spans 35 to 47 (SRSGPRQRTYSQN). Ca(2+)-binding residues include D92, D94, N96, Q98, and D103. Residues R279, 286–287 (WD), N323, 332–334 (RSQ), E399, R448, and G451 contribute to the substrate site. Active-site proton donor/acceptor residues include D453 and E657.

This sequence belongs to the glycosyl hydrolase 37 family. Ca(2+) is required as a cofactor.

The protein resides in the cytoplasm. It carries out the reaction alpha,alpha-trehalose + H2O = alpha-D-glucose + beta-D-glucose. Its pathway is carbohydrate degradation. In terms of biological role, hydrolyzes intracellular trehalose to glucose. Plays a role in pathogenicity, specifically in proliferation of invasive hyphae in rice blast disease. This is Cytosolic neutral trehalase (NTH1) from Pyricularia oryzae (strain 70-15 / ATCC MYA-4617 / FGSC 8958) (Rice blast fungus).